Reading from the N-terminus, the 320-residue chain is Pyrroline-5-carboxylate reductase 2 (320 aa).

At serine 2 the chain carries N-acetylserine. NADP(+)-binding positions include 6–11 and serine 34; that span reads IGAGQL. 9 residues coordinate NADPH: alanine 8, glutamine 10, leucine 11, serine 34, glutamate 36, asparagine 56, valine 70, lysine 71, and alanine 97. Residues asparagine 56, 69–72, and 95–97 each bind NADP(+); these read AVKP and CAA. Glutamate 164 contributes to the L-proline binding site. An NADPH-binding site is contributed by asparagine 230. Alanine 237 and threonine 238 together coordinate L-proline. Positions 296–305 are enriched in low complexity; that stretch reads TVSTLTPSSP. The segment at 296–320 is disordered; the sequence is TVSTLTPSSPGKLLTRSLALGGKKD. Residue serine 304 is modified to Phosphoserine.

Belongs to the pyrroline-5-carboxylate reductase family. Homodecamer; composed of 5 homodimers. Interacts with LTO1.

It is found in the cytoplasm. The protein localises to the mitochondrion. It carries out the reaction L-proline + NADP(+) = (S)-1-pyrroline-5-carboxylate + NADPH + 2 H(+). It catalyses the reaction L-proline + NAD(+) = (S)-1-pyrroline-5-carboxylate + NADH + 2 H(+). It functions in the pathway amino-acid biosynthesis; L-proline biosynthesis; L-proline from L-glutamate 5-semialdehyde: step 1/1. In terms of biological role, oxidoreductase that catalyzes the last step in proline biosynthesis, which corresponds to the reduction of pyrroline-5-carboxylate to L-proline using NAD(P)H. At physiologic concentrations, has higher specific activity in the presence of NADH. Involved in cellular response to oxidative stress. In some cell types, such as erythrocytes, its primary function may be the generation of NADP(+). The sequence is that of Pyrroline-5-carboxylate reductase 2 (PYCR2) from Pongo abelii (Sumatran orangutan).